Consider the following 142-residue polypeptide: Hemoglobin subunit pi (142 aa).

In terms of domain architecture, Globin spans 2–142; the sequence is TLTQAEKAAV…VSSVLTEKYR (141 aa). Heme b contacts are provided by His-59 and His-88.

Belongs to the globin family.

The pi' chain is the counterpart of the alpha chain in the major early embryonic hemoglobin P. In Cairina moschata (Muscovy duck), this protein is Hemoglobin subunit pi.